A 160-amino-acid polypeptide reads, in one-letter code: Protein cornichon homolog 2 (160 aa).

At M1–Y10 the chain is on the cytoplasmic side. Residues M11–F31 form a helical membrane-spanning segment. At D32–Y72 the chain is on the lumenal side. A helical transmembrane segment spans residues C73–L93. The Cytoplasmic portion of the chain corresponds to N94 to K138. Residues L139–S159 traverse the membrane as a helical segment. Residue F160 is a topological domain, lumenal.

This sequence belongs to the cornichon family. In terms of assembly, interacts with HBEGF. As to expression, expressed in the odd-numbered neuromeres (r3 and r5) of the developing hindbrain.

It localises to the membrane. Regulates the trafficking and gating properties of AMPA-selective glutamate receptors (AMPARs). Plays an important role in the proper development of cranial nerves by facilitating the secretion of HBEGF. This Gallus gallus (Chicken) protein is Protein cornichon homolog 2 (CNIH2).